The chain runs to 446 residues: MREILHIQGGQCGNQIGAKFWEVICGEHGVDPTGTYTGTSPQQLERINVYFNEASGGRHVPRAVLMDLEPGTMDSLRSGPIGGIFRPDNFVFGQSGAGNNWAKGHYTEGAELIDSVLDVVRKEAENCDCLQGFQVCHSLGGGTGSGMGTLLISKIREEYPDRMMLTFSVFPSPKVSDTVVEPYNATLSVHQLVENADECMVLDNEALYDICFRTLKLTNPSFGDLNHLISATMSGVTCCLRFPGQLNSDLRKLAVNLIPFPRLHFFMVGFAPLTSRGSQQYRALTVPELTQQMWDAKNMMCAADPRHGRYLTASAMFRGRMSTKEVDEQMINVQNKNSSYFVEWIPNNVKSSVCDIPPVGLSMASTFVGNSTSIQEMFRRVSEQFTAMFRRKAFLHWYTSEGMDEMEFTEAESNMNDLVAEYQQYQDATAEDDYDEDDDAAAADEA.

8 residues coordinate GTP: Gln-11, Glu-69, Ser-138, Gly-142, Thr-143, Gly-144, Asn-204, and Asn-226. Residue Glu-69 coordinates Mg(2+). Residues 426 to 446 (QDATAEDDYDEDDDAAAADEA) are disordered. Residues 429–446 (TAEDDYDEDDDAAAADEA) show a composition bias toward acidic residues.

This sequence belongs to the tubulin family. Dimer of alpha and beta chains. A typical microtubule is a hollow water-filled tube with an outer diameter of 25 nm and an inner diameter of 15 nM. Alpha-beta heterodimers associate head-to-tail to form protofilaments running lengthwise along the microtubule wall with the beta-tubulin subunit facing the microtubule plus end conferring a structural polarity. Microtubules usually have 13 protofilaments but different protofilament numbers can be found in some organisms and specialized cells. Mg(2+) is required as a cofactor. In terms of tissue distribution, expressed in anthers.

It localises to the cytoplasm. Its subcellular location is the cytoskeleton. Tubulin is the major constituent of microtubules, a cylinder consisting of laterally associated linear protofilaments composed of alpha- and beta-tubulin heterodimers. Microtubules grow by the addition of GTP-tubulin dimers to the microtubule end, where a stabilizing cap forms. Below the cap, tubulin dimers are in GDP-bound state, owing to GTPase activity of alpha-tubulin. The polypeptide is Tubulin beta-8 chain (TUBB8) (Oryza sativa subsp. japonica (Rice)).